The sequence spans 427 residues: Extracellular superoxide dismutase [Cu-Zn] 2 (427 aa).

Positions 1-20 are cleaved as a signal peptide; the sequence is MNKLIISLLIVLSAISIISA. Topologically, residues 21-406 are extracellular; sequence DYQYGYCKFG…PTETSQPGTS (386 aa). N-linked (GlcNAc...) asparagine glycosylation is found at N38, N57, N81, N190, and N218. Cu cation contacts are provided by H257, H259, and H275. 2 residues coordinate Zn(2+): H275 and H283. A glycan (N-linked (GlcNAc...) asparagine) is linked at N288. 2 residues coordinate Zn(2+): H292 and D295. H331 serves as a coordination point for Cu cation. Residue N376 is glycosylated (N-linked (GlcNAc...) asparagine). Positions 381–404 are disordered; that stretch reads GESTIEPSPTPSTTPTPTETSQPG. The span at 395–404 shows a compositional bias: low complexity; that stretch reads PTPTETSQPG. A helical transmembrane segment spans residues 407-426; sequence SYLAPFFVLILSSLISVILI. Position 427 (L427) is a topological domain, cytoplasmic.

It belongs to the Cu-Zn superoxide dismutase family. The cofactor is Cu cation. Requires Zn(2+) as cofactor.

The protein localises to the cell membrane. The catalysed reaction is 2 superoxide + 2 H(+) = H2O2 + O2. Protect the extracellular space from toxic effect of reactive oxygen intermediates by converting superoxyde radicals into hydrogen peroxyde and oxygen. The chain is Extracellular superoxide dismutase [Cu-Zn] 2 (sodB) from Dictyostelium discoideum (Social amoeba).